A 207-amino-acid polypeptide reads, in one-letter code: Nuclear transcription factor Y subunit beta (207 aa).

The a domain stretch occupies residues 1–52 (MTMDGDSSTTDASQLGISADYIGGSHYVIQPHDDTEDSMNDHEDTNGSKESF). The segment at 27 to 52 (YVIQPHDDTEDSMNDHEDTNGSKESF) is disordered. The span at 39–52 (MNDHEDTNGSKESF) shows a compositional bias: basic and acidic residues. A b domain region spans residues 53–142 (REQDIYLPIA…PLKLYLQKFR (90 aa)). The DNA-binding element occupies 59–65 (LPIANVA). The subunit association domain (SAD) stretch occupies residues 86–97 (VQECVSEFISFI). Lysine 140 participates in a covalent cross-link: Glycyl lysine isopeptide (Lys-Gly) (interchain with G-Cter in ubiquitin). Residues 143–207 (EAMKGEKGIG…ISGVQQIQFS (65 aa)) are c domain.

This sequence belongs to the NFYB/HAP3 subunit family. In terms of assembly, heterotrimeric transcription factor composed of three components, NF-YA, NF-YB and NF-YC. NF-YB and NF-YC must interact and dimerize for NF-YA association and DNA binding. Interacts with C1QBP. Monoubiquitination at Lys-140 plays an important role in transcriptional activation by allowing the deposition of histone H3 methylations as well as histone H2B monoubiquitination at 'Lys-121'.

It localises to the nucleus. Functionally, component of the sequence-specific heterotrimeric transcription factor (NF-Y) which specifically recognizes a 5'-CCAAT-3' box motif found in the promoters of its target genes. NF-Y can function as both an activator and a repressor, depending on its interacting cofactors. The polypeptide is Nuclear transcription factor Y subunit beta (Nfyb) (Mus musculus (Mouse)).